Reading from the N-terminus, the 406-residue chain is Cysteine desulfurase (406 aa).

Position 226 is an N6-(pyridoxal phosphate)lysine (K226). The active-site Cysteine persulfide intermediate is the C364.

It belongs to the class-V pyridoxal-phosphate-dependent aminotransferase family. Csd subfamily. Homodimer. Interacts with SufE and the SufBCD complex composed of SufB, SufC and SufD. The interaction with SufE is required to mediate the direct transfer of the sulfur atom from the S-sulfanylcysteine. It depends on pyridoxal 5'-phosphate as a cofactor.

The protein localises to the cytoplasm. It carries out the reaction (sulfur carrier)-H + L-cysteine = (sulfur carrier)-SH + L-alanine. It catalyses the reaction L-selenocysteine + AH2 = hydrogenselenide + L-alanine + A + H(+). It functions in the pathway cofactor biosynthesis; iron-sulfur cluster biosynthesis. Its function is as follows. Cysteine desulfurases mobilize the sulfur from L-cysteine to yield L-alanine, an essential step in sulfur metabolism for biosynthesis of a variety of sulfur-containing biomolecules. Component of the suf operon, which is activated and required under specific conditions such as oxidative stress and iron limitation. Acts as a potent selenocysteine lyase in vitro, that mobilizes selenium from L-selenocysteine. Selenocysteine lyase activity is however unsure in vivo. In Serratia proteamaculans (strain 568), this protein is Cysteine desulfurase.